A 119-amino-acid chain; its full sequence is Large ribosomal subunit protein uL18 (119 aa).

The interval 1–24 (MITKQDKNQVRKKRHARVRSKISG) is disordered. The segment covering 10–20 (VRKKRHARVRS) has biased composition (basic residues).

The protein belongs to the universal ribosomal protein uL18 family. In terms of assembly, part of the 50S ribosomal subunit; part of the 5S rRNA/L5/L18/L25 subcomplex. Contacts the 5S and 23S rRNAs.

In terms of biological role, this is one of the proteins that bind and probably mediate the attachment of the 5S RNA into the large ribosomal subunit, where it forms part of the central protuberance. The sequence is that of Large ribosomal subunit protein uL18 from Lysinibacillus sphaericus (strain C3-41).